Consider the following 737-residue polypeptide: Probable beta-glucosidase L (737 aa).

The signal sequence occupies residues 1–19; the sequence is MRSLIRSGALNAFLAASLA. The N-linked (GlcNAc...) asparagine glycan is linked to Asn-225. The active site involves Asp-253. Residues Asn-340, Asn-365, and Asn-608 are each glycosylated (N-linked (GlcNAc...) asparagine).

This sequence belongs to the glycosyl hydrolase 3 family.

Its subcellular location is the secreted. It catalyses the reaction Hydrolysis of terminal, non-reducing beta-D-glucosyl residues with release of beta-D-glucose.. It participates in glycan metabolism; cellulose degradation. Beta-glucosidases are one of a number of cellulolytic enzymes involved in the degradation of cellulosic biomass. Catalyzes the last step releasing glucose from the inhibitory cellobiose. The sequence is that of Probable beta-glucosidase L (bglL) from Emericella nidulans (strain FGSC A4 / ATCC 38163 / CBS 112.46 / NRRL 194 / M139) (Aspergillus nidulans).